The following is a 363-amino-acid chain: MTQPTLFIDRDGTLIDEPKTDFQIDSLEKLKLERNVIPALLKLKDHYRFVMVSNQDGLGTSSFPQETFDKPHNAMMELFRSQGIEFDEVLICPHKPEDNCDCRKPKTKLLQKYIDRELFDPATSFVIGDRATDVQLAENLGIRALQYHPEKLNWDLIAEKLLGEAVTNIGDRQPRYAEVVRKTKETDIKVQVWLDETGVNDIKTGVGFFDHMLDQIATHGGFRMNISCKGDLWIDEHHTVEDTALALGTALKQAIGDKRGIARFGFVLPMDECQAQCAMDLSGRPFIKFKAEFKRDKVGDFSTELTEHFFQSIAFTMLATLHIKAKGDNDHHKIESLFKVFGRTLRQAIRIEGNELPSSKGVL.

The segment at 1–174 (MTQPTLFIDR…AVTNIGDRQP (174 aa)) is histidinol-phosphatase. Asp9 acts as the Nucleophile in catalysis. Mg(2+) contacts are provided by Asp9 and Asp11. Asp11 (proton donor) is an active-site residue. Cys92, His94, Cys100, and Cys102 together coordinate Zn(2+). Asp129 is a binding site for Mg(2+). Positions 175–363 (RYAEVVRKTK…NELPSSKGVL (189 aa)) are imidazoleglycerol-phosphate dehydratase.

The protein in the N-terminal section; belongs to the histidinol-phosphatase family. In the C-terminal section; belongs to the imidazoleglycerol-phosphate dehydratase family. Mg(2+) is required as a cofactor. Zn(2+) serves as cofactor.

The protein resides in the cytoplasm. It catalyses the reaction D-erythro-1-(imidazol-4-yl)glycerol 3-phosphate = 3-(imidazol-4-yl)-2-oxopropyl phosphate + H2O. The enzyme catalyses L-histidinol phosphate + H2O = L-histidinol + phosphate. Its pathway is amino-acid biosynthesis; L-histidine biosynthesis; L-histidine from 5-phospho-alpha-D-ribose 1-diphosphate: step 6/9. It participates in amino-acid biosynthesis; L-histidine biosynthesis; L-histidine from 5-phospho-alpha-D-ribose 1-diphosphate: step 8/9. This chain is Histidine biosynthesis bifunctional protein HisB, found in Actinobacillus pleuropneumoniae serotype 5b (strain L20).